A 444-amino-acid polypeptide reads, in one-letter code: tRNA-2-methylthio-N(6)-dimethylallyladenosine synthase (444 aa).

Residues 10–126 (SSFYIHTFGC…LAGLVAGLRE (117 aa)) enclose the MTTase N-terminal domain. Cysteine 19, cysteine 55, cysteine 89, cysteine 163, cysteine 167, and cysteine 170 together coordinate [4Fe-4S] cluster. The 231-residue stretch at 149–379 (RAGSISAFLP…IELQNAISRE (231 aa)) folds into the Radical SAM core domain. The 63-residue stretch at 382–444 (QREIGKTVEV…TSATLSGEAV (63 aa)) folds into the TRAM domain.

This sequence belongs to the methylthiotransferase family. MiaB subfamily. In terms of assembly, monomer. The cofactor is [4Fe-4S] cluster.

The protein localises to the cytoplasm. It carries out the reaction N(6)-dimethylallyladenosine(37) in tRNA + (sulfur carrier)-SH + AH2 + 2 S-adenosyl-L-methionine = 2-methylsulfanyl-N(6)-dimethylallyladenosine(37) in tRNA + (sulfur carrier)-H + 5'-deoxyadenosine + L-methionine + A + S-adenosyl-L-homocysteine + 2 H(+). In terms of biological role, catalyzes the methylthiolation of N6-(dimethylallyl)adenosine (i(6)A), leading to the formation of 2-methylthio-N6-(dimethylallyl)adenosine (ms(2)i(6)A) at position 37 in tRNAs that read codons beginning with uridine. This chain is tRNA-2-methylthio-N(6)-dimethylallyladenosine synthase, found in Chlorobaculum tepidum (strain ATCC 49652 / DSM 12025 / NBRC 103806 / TLS) (Chlorobium tepidum).